Consider the following 97-residue polypeptide: Putative septation protein SpoVG (97 aa).

The protein belongs to the SpoVG family.

Could be involved in septation. This Borrelia garinii subsp. bavariensis (strain ATCC BAA-2496 / DSM 23469 / PBi) (Borreliella bavariensis) protein is Putative septation protein SpoVG.